The following is a 200-amino-acid chain: Ribonuclease HII (200 aa).

Residues 1–200 enclose the RNase H type-2 domain; it reads MRYGGVDEAG…EINKKLTDFI (200 aa). Residues aspartate 7, glutamate 8, and aspartate 99 each contribute to the a divalent metal cation site.

This sequence belongs to the RNase HII family. The cofactor is Mn(2+). Mg(2+) is required as a cofactor.

It localises to the cytoplasm. It catalyses the reaction Endonucleolytic cleavage to 5'-phosphomonoester.. Its function is as follows. Endonuclease that specifically degrades the RNA of RNA-DNA hybrids. The sequence is that of Ribonuclease HII from Nanoarchaeum equitans (strain Kin4-M).